The sequence spans 304 residues: Large ribosomal subunit protein uL18y (304 aa).

This sequence belongs to the universal ribosomal protein uL18 family. Component of the large ribosomal subunit (LSU).

It localises to the cytoplasm. The protein resides in the nucleus. Its function is as follows. Component of the ribosome, a large ribonucleoprotein complex responsible for the synthesis of proteins in the cell. The small ribosomal subunit (SSU) binds messenger RNAs (mRNAs) and translates the encoded message by selecting cognate aminoacyl-transfer RNA (tRNA) molecules. The large subunit (LSU) contains the ribosomal catalytic site termed the peptidyl transferase center (PTC), which catalyzes the formation of peptide bonds, thereby polymerizing the amino acids delivered by tRNAs into a polypeptide chain. The nascent polypeptides leave the ribosome through a tunnel in the LSU and interact with protein factors that function in enzymatic processing, targeting, and the membrane insertion of nascent chains at the exit of the ribosomal tunnel. This chain is Large ribosomal subunit protein uL18y (RPL5B), found in Oryza sativa subsp. japonica (Rice).